The following is a 350-amino-acid chain: Blue-sensitive opsin (350 aa).

Residues 1-36 lie on the Extracellular side of the membrane; sequence MNGTEGPNFYVPMSNATGVVRSPFEYPQYYLAEPWA. Residues N2 and N15 are each glycosylated (N-linked (GlcNAc...) asparagine). The helical transmembrane segment at 37-61 threads the bilayer; it reads FSILAAYMFFLIITGFPINFLTLYV. Over 62–73 the chain is Cytoplasmic; sequence TIEHKKLRTPLN. The helical transmembrane segment at 74–98 threads the bilayer; it reads YILLNLAVADLFMVFGGFTTTMYTS. Over 99 to 113 the chain is Extracellular; that stretch reads MHGYFVFGETGCNLE. C110 and C187 are joined by a disulfide. Residues 114-133 form a helical membrane-spanning segment; the sequence is GYFATLGGEISLWSLVVLAI. At 134–152 the chain is on the cytoplasmic side; that stretch reads ERWVVVCKPISNFRFGENH. Residues 153 to 176 form a helical membrane-spanning segment; sequence AIMGLTLTWVMANACAMPPLFGWS. The Extracellular segment spans residues 177 to 202; sequence RYIPEGLQCSCGIDYYTLKPEVNNES. N200 carries an N-linked (GlcNAc...) asparagine glycan. A helical transmembrane segment spans residues 203-230; that stretch reads FVIYMFLVHFTIPLTIISFCYGRLVCAV. Residues 231 to 252 are Cytoplasmic-facing; that stretch reads KEAAAQQQESETTQRAEREVTR. A helical membrane pass occupies residues 253–276; sequence MVVIMVISFLVCWIPYASVAWYIF. Over 277–284 the chain is Extracellular; that stretch reads THQGSTFG. A helical membrane pass occupies residues 285–309; the sequence is PIFMTVPSFFAKSSSIYNPMIYICM. An N6-(retinylidene)lysine modification is found at K296. Topologically, residues 310 to 350 are cytoplasmic; the sequence is NKQFRNCMITTLFCGKNPFEGEEEGSTTKTEASAVSSVSPA. The tract at residues 330–350 is disordered; sequence GEEEGSTTKTEASAVSSVSPA.

It belongs to the G-protein coupled receptor 1 family. Opsin subfamily. In terms of processing, phosphorylated on some or all of the serine and threonine residues present in the C-terminal region. Rod shaped photoreceptor cells which mediates vision in dim light.

The protein localises to the membrane. Functionally, visual pigments are the light-absorbing molecules that mediate vision. They consist of an apoprotein, opsin, covalently linked to cis-retinal. In Conger conger (Conger eel), this protein is Blue-sensitive opsin.